The sequence spans 125 residues: Holo-[acyl-carrier-protein] synthase (125 aa).

Mg(2+) is bound by residues Asp-8 and Glu-57.

This sequence belongs to the P-Pant transferase superfamily. AcpS family. Mg(2+) serves as cofactor.

It localises to the cytoplasm. It catalyses the reaction apo-[ACP] + CoA = holo-[ACP] + adenosine 3',5'-bisphosphate + H(+). In terms of biological role, transfers the 4'-phosphopantetheine moiety from coenzyme A to a Ser of acyl-carrier-protein. The polypeptide is Holo-[acyl-carrier-protein] synthase (Solibacter usitatus (strain Ellin6076)).